We begin with the raw amino-acid sequence, 754 residues long: 5-methyltetrahydropteroyltriglutamate--homocysteine methyltransferase (754 aa).

5-methyltetrahydropteroyltri-L-glutamate contacts are provided by residues 15–18 (RELK) and lysine 114. Residues 430 to 432 (IGS) and glutamate 483 contribute to the L-homocysteine site. L-methionine-binding positions include 430–432 (IGS) and glutamate 483. Residues 514–515 (RC) and tryptophan 560 contribute to the 5-methyltetrahydropteroyltri-L-glutamate site. Aspartate 598 lines the L-homocysteine pocket. Residue aspartate 598 coordinates L-methionine. Glutamate 604 serves as a coordination point for 5-methyltetrahydropteroyltri-L-glutamate. Zn(2+) contacts are provided by histidine 641, cysteine 643, and glutamate 665. The Proton donor role is filled by histidine 694. Cysteine 726 lines the Zn(2+) pocket.

Belongs to the vitamin-B12 independent methionine synthase family. Requires Zn(2+) as cofactor.

It carries out the reaction 5-methyltetrahydropteroyltri-L-glutamate + L-homocysteine = tetrahydropteroyltri-L-glutamate + L-methionine. It functions in the pathway amino-acid biosynthesis; L-methionine biosynthesis via de novo pathway; L-methionine from L-homocysteine (MetE route): step 1/1. Functionally, catalyzes the transfer of a methyl group from 5-methyltetrahydrofolate to homocysteine resulting in methionine formation. This Campylobacter jejuni subsp. jejuni serotype O:6 (strain 81116 / NCTC 11828) protein is 5-methyltetrahydropteroyltriglutamate--homocysteine methyltransferase.